Consider the following 522-residue polypeptide: Glutamate--cysteine ligase, chloroplastic (522 aa).

Cystine bridges form between Cys186–Cys406 and Cys349–Cys364.

The protein belongs to the carboxylate-amine ligase family. Glutamate--cysteine ligase type 2 subfamily. As to quaternary structure, homodimer or monomer when oxidized or reduced, respectively. The Cys-186-Cys-406 disulfide bridge is known to modulate the enzyme activity according to the redox status. The oxidized form constitutes the active enzyme. In terms of tissue distribution, abundant in leaves and roots. Expressed to a high level in leaf trichomes of mature plant.

Its subcellular location is the plastid. It is found in the chloroplast. It carries out the reaction L-cysteine + L-glutamate + ATP = gamma-L-glutamyl-L-cysteine + ADP + phosphate + H(+). It participates in sulfur metabolism; glutathione biosynthesis; glutathione from L-cysteine and L-glutamate: step 1/2. Feedback inhibition by glutathione. Inhibited by buthionine sulfoximine and cystamine. Its function is as follows. Seems to play an important role in controlling the expression of resistance responses like the regulation of salicylic acid (SA) and phytoalexin (camalexin) production. Involved in resistance to fungal and bacterial pathogens. Required for the regulation of cell proliferation in root apical meristems through the GSH-dependent developmental pathway. Also participates in the detoxification process, the antioxidant response and is essential for embryo development and proper seed maturation. The polypeptide is Glutamate--cysteine ligase, chloroplastic (GSH1) (Arabidopsis thaliana (Mouse-ear cress)).